Consider the following 212-residue polypeptide: Deoxyribose-phosphate aldolase (212 aa).

Asp89 functions as the Proton donor/acceptor in the catalytic mechanism. Lys151 acts as the Schiff-base intermediate with acetaldehyde in catalysis. Lys180 acts as the Proton donor/acceptor in catalysis.

This sequence belongs to the DeoC/FbaB aldolase family. DeoC type 1 subfamily.

Its subcellular location is the cytoplasm. It catalyses the reaction 2-deoxy-D-ribose 5-phosphate = D-glyceraldehyde 3-phosphate + acetaldehyde. The protein operates within carbohydrate degradation; 2-deoxy-D-ribose 1-phosphate degradation; D-glyceraldehyde 3-phosphate and acetaldehyde from 2-deoxy-alpha-D-ribose 1-phosphate: step 2/2. Its function is as follows. Catalyzes a reversible aldol reaction between acetaldehyde and D-glyceraldehyde 3-phosphate to generate 2-deoxy-D-ribose 5-phosphate. This is Deoxyribose-phosphate aldolase from Clostridium botulinum (strain Langeland / NCTC 10281 / Type F).